Reading from the N-terminus, the 288-residue chain is Co-chaperone protein DjlA (288 aa).

The Periplasmic segment spans residues 1–6; it reads MNFIGK. The chain crosses the membrane as a helical span at residues 7 to 30; sequence ILGFIIGYRFGGLFGGIAGLILGH. Residues 31–288 are Cytoplasmic-facing; sequence IADKKLYELG…DLICKVKGWK (258 aa). Positions 222 to 288 constitute a J domain; sequence DAYKVLGVNA…DLICKVKGWK (67 aa).

Homodimer.

Its subcellular location is the cell inner membrane. Its function is as follows. Regulatory DnaK co-chaperone. Direct interaction between DnaK and DjlA is needed for the induction of the wcaABCDE operon, involved in the synthesis of a colanic acid polysaccharide capsule, possibly through activation of the RcsB/RcsC phosphotransfer signaling pathway. The colanic acid capsule may help the bacterium survive conditions outside the host. The sequence is that of Co-chaperone protein DjlA from Mannheimia succiniciproducens (strain KCTC 0769BP / MBEL55E).